The primary structure comprises 714 residues: Fatty acid oxidation complex subunit alpha (714 aa).

The tract at residues 1–190 (MEMASAFTLN…KLGLVDDVVP (190 aa)) is enoyl-CoA hydratase. The interval 306–714 (APLNSVGILG…FWKTTATDLQ (409 aa)) is 3-hydroxyacyl-CoA dehydrogenase.

This sequence in the N-terminal section; belongs to the enoyl-CoA hydratase/isomerase family. The protein in the central section; belongs to the 3-hydroxyacyl-CoA dehydrogenase family. Heterotetramer of two alpha chains (FadJ) and two beta chains (FadI).

Its subcellular location is the cytoplasm. It catalyses the reaction a (3S)-3-hydroxyacyl-CoA = a (2E)-enoyl-CoA + H2O. The catalysed reaction is a 4-saturated-(3S)-3-hydroxyacyl-CoA = a (3E)-enoyl-CoA + H2O. The enzyme catalyses a (3S)-3-hydroxyacyl-CoA + NAD(+) = a 3-oxoacyl-CoA + NADH + H(+). It carries out the reaction (3S)-3-hydroxybutanoyl-CoA = (3R)-3-hydroxybutanoyl-CoA. It functions in the pathway lipid metabolism; fatty acid beta-oxidation. Functionally, catalyzes the formation of a hydroxyacyl-CoA by addition of water on enoyl-CoA. Also exhibits 3-hydroxyacyl-CoA epimerase and 3-hydroxyacyl-CoA dehydrogenase activities. This chain is Fatty acid oxidation complex subunit alpha, found in Escherichia coli O7:K1 (strain IAI39 / ExPEC).